The primary structure comprises 197 residues: Phosphoheptose isomerase (197 aa).

Residues 34–196 (MVQCLLGGNK…DRTLFPQDEQ (163 aa)) form the SIS domain. A substrate-binding site is contributed by 49–51 (NGG). His-58 and Glu-62 together coordinate Zn(2+). Substrate contacts are provided by residues Glu-62, 91–92 (ND), 117–119 (STS), Ser-122, and Gln-172. Zn(2+) contacts are provided by Gln-172 and His-180.

Belongs to the SIS family. GmhA subfamily. Homotetramer. The cofactor is Zn(2+).

It localises to the cytoplasm. The catalysed reaction is 2 D-sedoheptulose 7-phosphate = D-glycero-alpha-D-manno-heptose 7-phosphate + D-glycero-beta-D-manno-heptose 7-phosphate. It functions in the pathway carbohydrate biosynthesis; D-glycero-D-manno-heptose 7-phosphate biosynthesis; D-glycero-alpha-D-manno-heptose 7-phosphate and D-glycero-beta-D-manno-heptose 7-phosphate from sedoheptulose 7-phosphate: step 1/1. Catalyzes the isomerization of sedoheptulose 7-phosphate in D-glycero-D-manno-heptose 7-phosphate. The polypeptide is Phosphoheptose isomerase (Shewanella frigidimarina (strain NCIMB 400)).